The primary structure comprises 410 residues: Histone-lysine N-methyltransferase SUV39H2 (410 aa).

The 59-residue stretch at 47 to 105 (YEVEYLCDYKVVKDMEYYLVKWKGWPDSTNTWEPLQNLKCPLLLQQFFNDKHNYLSQVK) folds into the Chromo domain. One can recognise a Pre-SET domain in the interval 189 to 247 (FGCSCTDCFFEKCCPAEAGVLLAYNKNQQIKIPPGTPIYECNSRCQCGPDCPNRIVQKG). Residues cysteine 191, cysteine 193, cysteine 196, cysteine 201, cysteine 202, cysteine 229, cysteine 233, cysteine 235, and cysteine 239 each coordinate Zn(2+). In terms of domain architecture, SET spans 250–373 (YSLCIFRTSN…AGEELTFDYQ (124 aa)). Residues 261-263 (CGW), tyrosine 304, and 330-331 (NH) each bind S-adenosyl-L-methionine. A Zn(2+)-binding site is contributed by cysteine 333. Residues serine 381, serine 384, and serine 388 each carry the phosphoserine modification. In terms of domain architecture, Post-SET spans 394-410 (ARTVCKCGAVTCRGYLN). Zn(2+) contacts are provided by cysteine 398, cysteine 400, and cysteine 405.

This sequence belongs to the class V-like SAM-binding methyltransferase superfamily. Histone-lysine methyltransferase family. Suvar3-9 subfamily. In terms of assembly, interacts with SMAD5. The large PER complex involved in the histone methylation is composed of at least PER2, CBX3, TRIM28, SUV39H1 and/or SUV39H2; CBX3 mediates the formation of the complex. Post-translationally, ubiquitinated by the DCX(DCAF13) E3 ubiquitin ligase complex, leading to its degradation.

Its subcellular location is the nucleus. It is found in the chromosome. The protein resides in the centromere. The enzyme catalyses L-lysyl(9)-[histone H3] + 3 S-adenosyl-L-methionine = N(6),N(6),N(6)-trimethyl-L-lysyl(9)-[histone H3] + 3 S-adenosyl-L-homocysteine + 3 H(+). Histone methyltransferase that specifically trimethylates 'Lys-9' of histone H3 using monomethylated H3 'Lys-9' as substrate. H3 'Lys-9' trimethylation represents a specific tag for epigenetic transcriptional repression by recruiting HP1 (CBX1, CBX3 and/or CBX5) proteins to methylated histones. Mainly functions in heterochromatin regions, thereby playing a central role in the establishment of constitutive heterochromatin at pericentric and telomere regions. H3 'Lys-9' trimethylation is also required to direct DNA methylation at pericentric repeats. SUV39H1 is targeted to histone H3 via its interaction with RB1 and is involved in many processes, such as cell cycle regulation, transcriptional repression and regulation of telomere length. May participate in regulation of higher-order chromatin organization during spermatogenesis. Recruited by the large PER complex to the E-box elements of the circadian target genes such as PER2 itself or PER1, contributes to the conversion of local chromatin to a heterochromatin-like repressive state through H3 'Lys-9' trimethylation. In Bos taurus (Bovine), this protein is Histone-lysine N-methyltransferase SUV39H2 (SUV39H2).